Consider the following 285-residue polypeptide: Urease accessory protein UreD (285 aa).

The protein belongs to the UreD family. As to quaternary structure, ureD, UreF and UreG form a complex that acts as a GTP-hydrolysis-dependent molecular chaperone, activating the urease apoprotein by helping to assemble the nickel containing metallocenter of UreC. The UreE protein probably delivers the nickel.

It is found in the cytoplasm. Its function is as follows. Required for maturation of urease via the functional incorporation of the urease nickel metallocenter. In Azoarcus sp. (strain BH72), this protein is Urease accessory protein UreD.